A 905-amino-acid chain; its full sequence is DNA mismatch repair protein MutS (905 aa).

The segment at 1 to 95 (MELSLQGSLF…PAWGHHSQLK (95 aa)) is disordered. The segment covering 38-50 (NLSDADLSKDALA) has biased composition (basic and acidic residues). 721–728 (GPNASGKS) is an ATP binding site.

It belongs to the DNA mismatch repair MutS family.

This protein is involved in the repair of mismatches in DNA. It is possible that it carries out the mismatch recognition step. This protein has a weak ATPase activity. This chain is DNA mismatch repair protein MutS, found in Synechococcus sp. (strain CC9902).